A 551-amino-acid chain; its full sequence is Cytochrome c oxidase subunit 1 homolog (551 aa).

3 helical membrane passes run 14-34, 40-60, and 88-108; these read GELG…VVAA, EYAF…FVIG, and VGTL…VIIA. Heme b is bound at residue His132. Helical transmembrane passes span 133 to 153, 169 to 189, 202 to 222, 229 to 249, 280 to 300, 313 to 333, 345 to 365, and 383 to 403; these read TSAV…FYVV, FVVL…LLGI, ADLW…GTVL, IYVA…LHLG, GHNA…YYFI, LSIV…PHHL, LGMT…INGL, and MMVV…MMSV. The Cu cation site is built by His281, His331, and His332. Heme b contacts are provided by His419 and His421. 3 consecutive transmembrane segments (helical) span residues 424 to 444, 459 to 479, and 513 to 533; these read ALGW…PWLW, FWVS…AGIL, and IGGI…FMTI.

Belongs to the heme-copper respiratory oxidase family. Cu(2+) serves as cofactor. The cofactor is heme b.

Its subcellular location is the cell membrane. It carries out the reaction 4 Fe(II)-[cytochrome c] + O2 + 8 H(+)(in) = 4 Fe(III)-[cytochrome c] + 2 H2O + 4 H(+)(out). It functions in the pathway energy metabolism; oxidative phosphorylation. In terms of biological role, cytochrome c oxidase is the component of the respiratory chain that catalyzes the reduction of oxygen to water. Subunits 1-3 form the functional core of the enzyme complex. Co I is the catalytic subunit of the enzyme. Electrons originating in cytochrome c or a quinol are transferred to the bimetallic center formed by a high-spin heme and copper B. This is Cytochrome c oxidase subunit 1 homolog (fixN) from Azorhizobium caulinodans (strain ATCC 43989 / DSM 5975 / JCM 20966 / LMG 6465 / NBRC 14845 / NCIMB 13405 / ORS 571).